The primary structure comprises 197 residues: Putative ankyrin repeat protein R875 (197 aa).

ANK repeat units follow at residues 78-106 (LNKCLIGYCISGRLDIVKYLVILGADIRE), 107-136 (NDDCVVRTACHNGHIEVVKYLVNQGADIRA), 138-166 (DDDAIRLASKNGHLYVVKYLVSQGVNFRK), and 168-196 (NDYEINWASQNGHGSVVDFLVSKGAVLHE).

In Acanthamoeba polyphaga mimivirus (APMV), this protein is Putative ankyrin repeat protein R875.